We begin with the raw amino-acid sequence, 418 residues long: Putative ion-transport protein YfeO (418 aa).

A run of 11 helical transmembrane segments spans residues 9 to 31, 55 to 77, 90 to 112, 122 to 140, 147 to 169, 189 to 211, 223 to 244, 259 to 281, 301 to 323, 343 to 363, and 376 to 398; these read MLLLSLPAVAIGIASSLILIMVM, SPLWIIGVLTLTGIAVGLVIRFS, LIGAPIPPSALPGLIVALILGLA, PIITVNIALAVAIGARLLP, WTILASAGTIGALFGTPVAAALI, PLMAAAAGALTTGLFFHPHFSLP, ILSGAIVAAIAIAAGMVAVWCL, FVLGIGGFILGILGVIGGPVSLF, YFLLAVIKLAALVVAAASGFRGG, VPAVPAAITVSCAILGIVLVV, and VVVPNTTLLPLLCIVMLPAWLLL.

The protein belongs to the chloride channel (TC 2.A.49) family.

It localises to the cell membrane. This chain is Putative ion-transport protein YfeO (yfeO), found in Escherichia coli O6:H1 (strain CFT073 / ATCC 700928 / UPEC).